A 903-amino-acid polypeptide reads, in one-letter code: DNA-directed DNA polymerase (903 aa).

Positions 103–340 (YDHTKIRVAN…VLQIDAKRQF (238 aa)) are 3'-5'exonuclease. Asp-114, Glu-116, and Asp-222 together coordinate Mg(2+). A beta hairpin region spans residues 248 to 264 (TRVKVIENMYGSREIIT). The Mg(2+) site is built by Asp-327, Asp-411, and Leu-412. Positions 380-903 (IPQGRSHPVQ…KASLFDMFDF (524 aa)) are polymerase. Substrate-binding positions include 414 to 416 (SLY), Arg-482, and Lys-560. Residue Asp-623 participates in Mg(2+) binding. The interval 705-708 (KKRY) is binding of DNA in B-conformation. Residues 897 to 903 (LFDMFDF) are interaction with the polymerase clamp.

This sequence belongs to the DNA polymerase type-B family. Part of the replicase complex that includes the DNA polymerase, the polymerase clamp, the clamp loader complex, the single-stranded DNA binding protein, and the primase/helicase. Interacts with the polymerase clamp; this interaction constitutes the polymerase holoenzyme. Requires Mg(2+) as cofactor.

The catalysed reaction is DNA(n) + a 2'-deoxyribonucleoside 5'-triphosphate = DNA(n+1) + diphosphate. Replicates the viral genomic DNA. This polymerase possesses two enzymatic activities: DNA synthesis (polymerase) and an exonucleolytic activity that degrades single-stranded DNA in the 3'- to 5'-direction for proofreading purpose. The chain is DNA-directed DNA polymerase (43) from Escherichia coli (Bacteriophage RB69).